The following is a 150-amino-acid chain: 15 kDa calcium-binding protein (150 aa).

The residue at position 1 (Ala-1) is an N-acetylalanine. EF-hand domains lie at 7–42 (TDAE…AGKS), 43–78 (FSEE…KMMK), 81–116 (WKKS…RIEP), and 118–150 (MSKE…IKSS). Asp-22, Asp-24, Ser-26, Thr-28, Asp-56, Asp-58, Ser-60, Thr-62, Glu-67, Asp-94, Asp-96, Asn-98, Glu-105, Asp-131, Asp-133, Asp-135, Lys-137, and Glu-142 together coordinate Ca(2+).

It is found in the nucleus. The protein localises to the cytoplasm. It localises to the cytoskeleton. Its subcellular location is the spindle. May play an important role in mitosis of sea urchin egg. May function as a Ca(2+)-dependent intracellular modulator of microtubule assembly. This chain is 15 kDa calcium-binding protein, found in Hemicentrotus pulcherrimus (Sea urchin).